Reading from the N-terminus, the 204-residue chain is Demethylsterigmatocystin 6-O-methyltransferase stcP (204 aa).

S-adenosyl-L-methionine-binding positions include 48 to 49 (GG), Asp-73, 93 to 94 (DF), and Arg-109. The active-site Proton acceptor is the His-113.

Belongs to the class I-like SAM-binding methyltransferase superfamily. Cation-independent O-methyltransferase family.

It carries out the reaction 6-demethylsterigmatocystin + S-adenosyl-L-methionine = sterigmatocystin + S-adenosyl-L-homocysteine + H(+). Its pathway is mycotoxin biosynthesis; sterigmatocystin biosynthesis. Functionally, norsolorinic acid reductase; part of the gene cluster that mediates the biosynthesis of sterigmatocystin (ST), a polyketide-derived furanocoumarin which is part of the most toxic and carcinogenic compounds among the known mycotoxins. The first step in the biosynthesis of sterigmatocystin is the production of hexanoate by the fatty acid synthase (FAS) units stcJ and stcK. The polyketide backbone is assembled by the non-reducing polyketide synthase stcA by condensation of the starter hexanoyl-CoA and 7 malonyl-CoA extender units followed by cyclization and release of norsolorinic acid. Norsolorinic acid is the first stable intermediate in the biosynthesis of sterigmatocystin and is converted into averantin (AVN) by the ketoreductase stcE which reduces the hexanoate ketone to an alcohol. Averantin is then oxidized into 5'-hydroxyaverantin (HAVN) by the cytochrome P450 monooxygenase stcF. 5'-hydroxyaverantin is further converted to 5'-oxyaverantin (OAVN) by the 5'-hydroxyaverantin dehydrogenase stcG. The next step is the conversion of OAVN into averufin (AVF) which is catalyzed by a yet to be identified enzyme. The cytochrome P450 monooxygenase stcB and the flavin-binding monooxygenase stcW are both required for the conversion of averufin to 1-hydroxyversicolorone. The esterase stcI probably catalyzes the formation of versiconal hemiacetal acetate from 1-hydroxyversicolorone. The oxydoreductase stcN then probably catalyzes the biosynthetic step from versiconal to versicolorin B (VERB). The next step is performed by the versicolorin B desaturase stcL to produce versicolorin A (VERA). The ketoreductase stcU and the cytochrome P450 monooxygenase stcS are involved in the conversion of versicolorin A to demethylsterigmatocystin. The Baeyer-Villiger oxidas stcQ and the reductase stcR might be involved in the biosynthetic step from versicolorin A to demethylsterigmatocystin. The final step in the biosynthesis of sterigmatocystin is the methylation of demethylsterigmatocystin catalyzed by the methyltransferase stcP. This chain is Demethylsterigmatocystin 6-O-methyltransferase stcP, found in Emericella nidulans (strain FGSC A4 / ATCC 38163 / CBS 112.46 / NRRL 194 / M139) (Aspergillus nidulans).